The following is a 167-amino-acid chain: Peptidyl-prolyl cis-trans isomerase-like 3 (167 aa).

A PPIase cyclophilin-type domain is found at 1–153; it reads MSVTLHTNLG…QEIKLLNVTV (153 aa).

This sequence belongs to the cyclophilin-type PPIase family. PPIL3 subfamily.

The catalysed reaction is [protein]-peptidylproline (omega=180) = [protein]-peptidylproline (omega=0). In terms of biological role, PPIases accelerate the folding of proteins. It catalyzes the cis-trans isomerization of proline imidic peptide bonds in oligopeptides. This is Peptidyl-prolyl cis-trans isomerase-like 3 (CYP10) from Cryptococcus neoformans var. neoformans serotype D (strain B-3501A) (Filobasidiella neoformans).